A 330-amino-acid chain; its full sequence is MKVFYDSDFKLDALKEKTIAVIGYGSQGRAQSLNMKDSGLNVVVGLRKNGASWNNAKADGHNVMTIEEAAEKADIIHILIPDELQAEVYESQIKPYLKEGKTLSFSHGFNIHYGFIVPPKGVNVVLVAPKSPGKMVRRTYEEGFGVPGLICIEIDATNNAFDIVSAMAKGIGLSRAGVIQTTFKEETETDLFGEQAVLCGGVTELIKAGFETLVEAGYAPEMAYFETCHELKLIVDLIYQKGFKNMWNDVSNTAEYGGLTRRSRIVTADSKAAMKEILREIQDGRFTKEFLLEKQVSYAHLKSMRRLEGDLQIEEVGAKLRKMCGLEKEE.

Positions 1-181 (MKVFYDSDFK…GLSRAGVIQT (181 aa)) constitute a KARI N-terminal Rossmann domain. Residues 24–27 (YGSQ), Arg47, Ser52, and 82–85 (DELQ) each bind NADP(+). Residue His107 is part of the active site. Gly133 contacts NADP(+). The region spanning 182–327 (TFKEETETDL…AKLRKMCGLE (146 aa)) is the KARI C-terminal knotted domain. Mg(2+) contacts are provided by Asp190, Glu194, Glu226, and Glu230. Ser251 is a substrate binding site.

Belongs to the ketol-acid reductoisomerase family. Requires Mg(2+) as cofactor.

The catalysed reaction is (2R)-2,3-dihydroxy-3-methylbutanoate + NADP(+) = (2S)-2-acetolactate + NADPH + H(+). It carries out the reaction (2R,3R)-2,3-dihydroxy-3-methylpentanoate + NADP(+) = (S)-2-ethyl-2-hydroxy-3-oxobutanoate + NADPH + H(+). It participates in amino-acid biosynthesis; L-isoleucine biosynthesis; L-isoleucine from 2-oxobutanoate: step 2/4. It functions in the pathway amino-acid biosynthesis; L-valine biosynthesis; L-valine from pyruvate: step 2/4. Its function is as follows. Involved in the biosynthesis of branched-chain amino acids (BCAA). Catalyzes an alkyl-migration followed by a ketol-acid reduction of (S)-2-acetolactate (S2AL) to yield (R)-2,3-dihydroxy-isovalerate. In the isomerase reaction, S2AL is rearranged via a Mg-dependent methyl migration to produce 3-hydroxy-3-methyl-2-ketobutyrate (HMKB). In the reductase reaction, this 2-ketoacid undergoes a metal-dependent reduction by NADPH to yield (R)-2,3-dihydroxy-isovalerate. This chain is Ketol-acid reductoisomerase (NADP(+)), found in Methanococcus maripaludis (strain DSM 14266 / JCM 13030 / NBRC 101832 / S2 / LL).